We begin with the raw amino-acid sequence, 513 residues long: MTAKRPLALLILDGWGYREDQESNAIFHANTPVLDNLKANYPNGLISGSGHDVGLPDGQMGNSEVGHINLGSGRIVYQELTRISKAIEDGEFDDNPALCKAVDAAIAANGAVHIMGLLSPGGVHSHEEHIEAMIRMAAKRGATKVYLHAFLDGRDTPPRSAKGSLAHFTELFASLNAGRIASIVGRYFAMDRDNRWDRVVQAYDLITQGKGKHSATNAVDALEAAYARDENDEFVAPTAIVDANGDSVSLNDNDALIFMNFRADRARQISRSFTDPAFAGFERAVTPKTHFVMLTEYAGDIQGDIAFPSEDLVNTLGEVLQNSGKTQLRISETEKYAHVTFFFNGGKEQPFDGEDRILINSPKVATYDLQPEMSSTELTDKLVEAIESAKYDVIICNYPNGDMVGHTGNFDAAVKACEAVDTCIGRVVDALAKVGGECLITADHGNAEQMRDPSTGQAHTAHTSELVPFIYVGRDASIAEGGRLSDIAPTMLNLMGQDIPAEMTGRVLITIKE.

Mn(2+)-binding residues include aspartate 13 and serine 63. Residue serine 63 is the Phosphoserine intermediate of the active site. Substrate-binding positions include histidine 124, 154–155 (RD), arginine 186, arginine 192, 262–265 (RADR), and lysine 335. 5 residues coordinate Mn(2+): aspartate 402, histidine 406, aspartate 443, histidine 444, and histidine 462.

It belongs to the BPG-independent phosphoglycerate mutase family. Monomer. Mn(2+) serves as cofactor.

The enzyme catalyses (2R)-2-phosphoglycerate = (2R)-3-phosphoglycerate. The protein operates within carbohydrate degradation; glycolysis; pyruvate from D-glyceraldehyde 3-phosphate: step 3/5. Functionally, catalyzes the interconversion of 2-phosphoglycerate and 3-phosphoglycerate. This is 2,3-bisphosphoglycerate-independent phosphoglycerate mutase from Shewanella amazonensis (strain ATCC BAA-1098 / SB2B).